We begin with the raw amino-acid sequence, 253 residues long: MTTIDLNCDLGESFGAYKMGNDDEILPFVSSINVACGFHAGDPSVMRQTVEKALQHNVAIGAHPGFPDLIGFGRRNMNVSASEVYDYVLYQIGALDAFVKAAGGKMQHVKPHGALYNMAATNPEIADAIAKAIYHSNPNLLLYGLANSEAFIQAAEKYNITLVQEAFADRTYKQDGTLTSRTEENALIKNEDEAIKQVLQMVKEGYVNSVNGEKVEVQAKTICLHGDSEKAVQFAERIYRTFELNGISICAPK.

This sequence belongs to the LamB/PxpA family. As to quaternary structure, forms a complex composed of PxpA, PxpB and PxpC.

The enzyme catalyses 5-oxo-L-proline + ATP + 2 H2O = L-glutamate + ADP + phosphate + H(+). In terms of biological role, catalyzes the cleavage of 5-oxoproline to form L-glutamate coupled to the hydrolysis of ATP to ADP and inorganic phosphate. In Bacillus cereus (strain ATCC 10987 / NRS 248), this protein is 5-oxoprolinase subunit A.